The sequence spans 248 residues: Probable transcriptional regulatory protein FTF0655 (248 aa).

Belongs to the TACO1 family.

It is found in the cytoplasm. The polypeptide is Probable transcriptional regulatory protein FTF0655 (Francisella tularensis subsp. tularensis (strain FSC 198)).